A 314-amino-acid polypeptide reads, in one-letter code: Peroxidase 2 (314 aa).

Positions 1 to 23 are cleaved as a signal peptide; that stretch reads MASASSVSLMLLVAAAMASAASA. Q24 carries the pyrrolidone carboxylic acid modification. 4 cysteine pairs are disulfide-bonded: C34–C109, C67–C72, C115–C310, and C194–C219. H65 serves as the catalytic Proton acceptor. Ca(2+)-binding residues include D66, V69, G71, D73, and S75. N148 carries N-linked (GlcNAc...) asparagine glycosylation. Substrate is bound at residue P157. N169 carries an N-linked (GlcNAc...) asparagine glycan. H187 serves as a coordination point for heme b. T188 lines the Ca(2+) pocket. N-linked (GlcNAc...) asparagine glycosylation occurs at N203. 3 residues coordinate Ca(2+): D234, T237, and D242. 2 N-linked (GlcNAc...) asparagine glycosylation sites follow: N274 and N309.

The protein belongs to the peroxidase family. Classical plant (class III) peroxidase subfamily. Requires Ca(2+) as cofactor. It depends on heme b as a cofactor.

The protein resides in the secreted. The enzyme catalyses 2 a phenolic donor + H2O2 = 2 a phenolic radical donor + 2 H2O. Removal of H(2)O(2), oxidation of toxic reductants, biosynthesis and degradation of lignin, suberization, auxin catabolism, response to environmental stresses such as wounding, pathogen attack and oxidative stress. These functions might be dependent on each isozyme/isoform in each plant tissue. The polypeptide is Peroxidase 2 (PRX112) (Oryza sativa subsp. indica (Rice)).